Consider the following 333-residue polypeptide: Anthranilate phosphoribosyltransferase (333 aa).

5-phospho-alpha-D-ribose 1-diphosphate-binding positions include G81, 84 to 85 (GD), T89, 91 to 94 (NIST), 109 to 117 (KHGNRSVSS), and A121. G81 is a binding site for anthranilate. S93 lines the Mg(2+) pocket. Position 112 (N112) interacts with anthranilate. Residue R167 coordinates anthranilate. Positions 225 and 226 each coordinate Mg(2+).

Belongs to the anthranilate phosphoribosyltransferase family. Homodimer. Mg(2+) is required as a cofactor.

The catalysed reaction is N-(5-phospho-beta-D-ribosyl)anthranilate + diphosphate = 5-phospho-alpha-D-ribose 1-diphosphate + anthranilate. The protein operates within amino-acid biosynthesis; L-tryptophan biosynthesis; L-tryptophan from chorismate: step 2/5. In terms of biological role, catalyzes the transfer of the phosphoribosyl group of 5-phosphorylribose-1-pyrophosphate (PRPP) to anthranilate to yield N-(5'-phosphoribosyl)-anthranilate (PRA). The chain is Anthranilate phosphoribosyltransferase from Pasteurella multocida (strain Pm70).